The chain runs to 332 residues: 5-formaminoimidazole-4-carboxamide-1-(beta)-D-ribofuranosyl 5'-monophosphate synthetase (332 aa).

2 residues coordinate 5-amino-1-(5-phospho-beta-D-ribosyl)imidazole-4-carboxamide: histidine 9 and serine 72. An ATP-grasp domain is found at 93–323 (RNLFPWESNQ…IGREINLAIQ (231 aa)). Residues 123–183 (PEDV…IPMY) and glutamate 205 contribute to the ATP site. A 5-amino-1-(5-phospho-beta-D-ribosyl)imidazole-4-carboxamide-binding site is contributed by asparagine 229. Mg(2+) is bound by residues glutamate 268 and glutamate 281.

Belongs to the phosphohexose mutase family. Mg(2+) is required as a cofactor. Requires Mn(2+) as cofactor.

The enzyme catalyses 5-amino-1-(5-phospho-beta-D-ribosyl)imidazole-4-carboxamide + formate + ATP = 5-formamido-1-(5-phospho-D-ribosyl)imidazole-4-carboxamide + ADP + phosphate. The protein operates within purine metabolism; IMP biosynthesis via de novo pathway; 5-formamido-1-(5-phospho-D-ribosyl)imidazole-4-carboxamide from 5-amino-1-(5-phospho-D-ribosyl)imidazole-4-carboxamide (formate route): step 1/1. Catalyzes the ATP- and formate-dependent formylation of 5-aminoimidazole-4-carboxamide-1-beta-d-ribofuranosyl 5'-monophosphate (AICAR) to 5-formaminoimidazole-4-carboxamide-1-beta-d-ribofuranosyl 5'-monophosphate (FAICAR) in the absence of folates. The chain is 5-formaminoimidazole-4-carboxamide-1-(beta)-D-ribofuranosyl 5'-monophosphate synthetase from Metallosphaera sedula (strain ATCC 51363 / DSM 5348 / JCM 9185 / NBRC 15509 / TH2).